We begin with the raw amino-acid sequence, 143 residues long: Small ribosomal subunit protein uS12 (143 aa).

Hydroxyproline is present on Pro62.

Belongs to the universal ribosomal protein uS12 family.

This is Small ribosomal subunit protein uS12 (rps23) from Dictyostelium discoideum (Social amoeba).